The chain runs to 78 residues: Large ribosomal subunit protein bL28 (78 aa).

Residues 1 to 20 form a disordered region; the sequence is MSRVCQVTGKRPVTGNNRSH.

It belongs to the bacterial ribosomal protein bL28 family.

This Vibrio campbellii (strain ATCC BAA-1116) protein is Large ribosomal subunit protein bL28.